The chain runs to 242 residues: ATP-dependent dethiobiotin synthetase BioD (242 aa).

12-17 (EVGKTV) is a binding site for ATP. Threonine 16 contributes to the Mg(2+) binding site. Lysine 37 is an active-site residue. Substrate is bound at residue serine 41. ATP contacts are provided by residues aspartate 51 and 112–115 (EGAG). Residues aspartate 51 and glutamate 112 each coordinate Mg(2+).

Belongs to the dethiobiotin synthetase family. As to quaternary structure, homodimer. Requires Mg(2+) as cofactor.

The protein resides in the cytoplasm. It catalyses the reaction (7R,8S)-7,8-diammoniononanoate + CO2 + ATP = (4R,5S)-dethiobiotin + ADP + phosphate + 3 H(+). It participates in cofactor biosynthesis; biotin biosynthesis; biotin from 7,8-diaminononanoate: step 1/2. Its function is as follows. Catalyzes a mechanistically unusual reaction, the ATP-dependent insertion of CO2 between the N7 and N8 nitrogen atoms of 7,8-diaminopelargonic acid (DAPA, also called 7,8-diammoniononanoate) to form a ureido ring. This Bacillus cereus (strain G9842) protein is ATP-dependent dethiobiotin synthetase BioD.